The primary structure comprises 160 residues: MPLELDLQVASAAPDLPSEAQFRAWCELALRQRPESELTIRLVDEAEGLELNSTYRHKDYATNVLSFPADVPDELLDIPLLGDLVICAPVVAREALEQRKPLQAHWAHLVIHGCLHLLGYDHIDDAEAEEMETLERELLAELGHPDPYACDDEEPPSKEK.

Histidine 112, histidine 116, and histidine 122 together coordinate Zn(2+). The disordered stretch occupies residues 141 to 160 (ELGHPDPYACDDEEPPSKEK).

Belongs to the endoribonuclease YbeY family. It depends on Zn(2+) as a cofactor.

The protein localises to the cytoplasm. In terms of biological role, single strand-specific metallo-endoribonuclease involved in late-stage 70S ribosome quality control and in maturation of the 3' terminus of the 16S rRNA. The polypeptide is Endoribonuclease YbeY (Pseudomonas aeruginosa (strain UCBPP-PA14)).